The chain runs to 1095 residues: MAELKNRIFYNQVMDKSAIKQLIIRLVACLGRVCTAHILDQLKTLGFQYSTQTGISLGIDDLLASPLKNWILQDAENEANVSQEYCRHGYIHAVERLRQIVETWHTTSEFLKREMTVSFNILDGFNPVHMMSFSGARGNVSQVHQLVGMRGLISDPQGNIIDLPIQSNLREGLSLTEYIISCYGARKGVVDTAIRTADAGYLTRRLVEVAQHVVIRNVDCNTYEGIILRSIRTRQGNAYLTQENRIIGRVLARPLYFGKRCIAVRNQDIGPDLAAKLSIISPQAILVRSPITCKTTDWVCQLCYGWGVNQGKMVSLGEAIGVVAGQSIGEPGTQLTLRTFHTGGVFTGDIANHLRAPFNGIAHFETHNCKPTRNRHGRLVWKCLQDLTITVIGQGKKHSLNVPSQSLLLINNNQYVESKQVIAEVRASIAPIKEKVQRNIYSYLQGEVVHTRSALRLSNAFSGTILLIHHNPNTGHLWIWSGKLYQLSGQQASSIYTSEDFIQTNITVANKRYLKFDTHKISNKKVLKSVLIGKFTRFKQVKSIQTGTVRSVLIQKPDTLRMVVLSSVDQLEITMHKTPYIMEPLLTQKISNNILNLTSYPKSSTLISKQKNTVSSFASIHIKRPTIGFQFQLPIVPKIRCYSLGLLGKLQRPLQYNLVLSSPTQPIFIDRYYNTFTNWCYLNEHGNSYNLYGLQMIVLDKKLYNNNSISGLFNTYRNIPKIGQLICKGTFVQQTTQLSESGKIVSIFKHKIVLRLSQPYLLAPGTFIHPDCYDVINRGDIVITMMYEQLRTTDIIQGLPKAEQLLEARSFNEVVLKLENDFVMLTERIARQLRSLSRSYMLSTKESTKHSQIDLVNRIQTVYLSQGVRIVDKHIEIIVRQMSSKVMLVENGDPLAVSSGGLICLPLPPIGSFLPENWIEIPLSYVIDNHTFLPRELVELTRAQKINYVIQNPVAYKPVLLGITKASLNTNSFISEASFQQTARVLSKSAIKNRVDWIRGLQENVLFGRMIPAGTGCREISSQLQYGNIFQKKWAQHTKWKLFVNSFGLNLSCLQIYLHFQAYCLESTNEQPQSNLHVHNSRIFPFTTICSILKS.

Zn(2+) contacts are provided by C220, C293, C300, and C303.

Belongs to the RNA polymerase beta' chain family. RpoC2 subfamily. In terms of assembly, in plastids the minimal PEP RNA polymerase catalytic core is composed of four subunits: alpha, beta, beta', and beta''. When a (nuclear-encoded) sigma factor is associated with the core the holoenzyme is formed, which can initiate transcription. Zn(2+) serves as cofactor.

Its subcellular location is the plastid. The protein resides in the chloroplast. The catalysed reaction is RNA(n) + a ribonucleoside 5'-triphosphate = RNA(n+1) + diphosphate. In terms of biological role, DNA-dependent RNA polymerase catalyzes the transcription of DNA into RNA using the four ribonucleoside triphosphates as substrates. The sequence is that of DNA-directed RNA polymerase subunit beta'' from Zygnema circumcarinatum (Green alga).